The following is a 341-amino-acid chain: tRNA N6-adenosine threonylcarbamoyltransferase (341 aa).

Fe cation contacts are provided by H111 and H115. Residues 134-138 (LVSGG), D167, G180, and N276 each bind substrate. A Fe cation-binding site is contributed by D304.

This sequence belongs to the KAE1 / TsaD family. Requires Fe(2+) as cofactor.

Its subcellular location is the cytoplasm. The catalysed reaction is L-threonylcarbamoyladenylate + adenosine(37) in tRNA = N(6)-L-threonylcarbamoyladenosine(37) in tRNA + AMP + H(+). In terms of biological role, required for the formation of a threonylcarbamoyl group on adenosine at position 37 (t(6)A37) in tRNAs that read codons beginning with adenine. Is involved in the transfer of the threonylcarbamoyl moiety of threonylcarbamoyl-AMP (TC-AMP) to the N6 group of A37, together with TsaE and TsaB. TsaD likely plays a direct catalytic role in this reaction. This Pseudomonas paraeruginosa (strain DSM 24068 / PA7) (Pseudomonas aeruginosa (strain PA7)) protein is tRNA N6-adenosine threonylcarbamoyltransferase.